A 319-amino-acid polypeptide reads, in one-letter code: Malate dehydrogenase (319 aa).

NAD(+)-binding positions include 10–15 (GAGNIG) and Asp-34. Residues Arg-83 and Arg-89 each coordinate substrate. NAD(+) contacts are provided by residues Asn-96 and 119–121 (ITN). Substrate contacts are provided by Asn-121 and Arg-152. His-176 (proton acceptor) is an active-site residue.

The protein belongs to the LDH/MDH superfamily. MDH type 3 family.

The enzyme catalyses (S)-malate + NAD(+) = oxaloacetate + NADH + H(+). Functionally, catalyzes the reversible oxidation of malate to oxaloacetate. This is Malate dehydrogenase from Francisella tularensis subsp. tularensis (strain FSC 198).